Consider the following 500-residue polypeptide: L-arabinose isomerase (500 aa).

Glutamate 306, glutamate 333, histidine 350, and histidine 450 together coordinate Mn(2+).

The protein belongs to the arabinose isomerase family. In terms of assembly, homohexamer. The cofactor is Mn(2+).

It catalyses the reaction beta-L-arabinopyranose = L-ribulose. It participates in carbohydrate degradation; L-arabinose degradation via L-ribulose; D-xylulose 5-phosphate from L-arabinose (bacterial route): step 1/3. In terms of biological role, catalyzes the conversion of L-arabinose to L-ribulose. The sequence is that of L-arabinose isomerase from Klebsiella pneumoniae subsp. pneumoniae (strain ATCC 700721 / MGH 78578).